A 1431-amino-acid chain; its full sequence is Probable ATP-dependent RNA helicase spindle-E (1431 aa).

A Helicase ATP-binding domain is found at 127-294; the sequence is LAAIRENPVV…FAMSSSLPPV (168 aa). An ATP-binding site is contributed by 140 to 147; that stretch reads GETGCGKT. The DEAH box motif lies at 240–243; the sequence is DEVH. The 173-residue stretch at 354-526 folds into the Helicase C-terminal domain; sequence QSQQSYEEAK…NSVLKAKELE (173 aa). The Tudor domain maps to 937 to 1000; that stretch reads AKAVTKGLQL…RLMSPQLKRD (64 aa).

It belongs to the DEAD box helicase family. DEAH subfamily.

It localises to the cytoplasm. The enzyme catalyses ATP + H2O = ADP + phosphate + H(+). In terms of biological role, probable ATP-binding RNA helicase which plays a central role during spermatogenesis and oogenesis by repressing transposable elements and preventing their mobilization, which is essential for the germline integrity. Acts via the piRNA metabolic process, which mediates the repression of transposable elements during meiosis by forming complexes composed of piRNAs and Piwi and govern the methylation and subsequent repression of transposons. Involved in the repression of LTR retrotransposon copia. Also involved in telomere regulation by repressing specialized telomeric retroelements HeT-A, TAHRE, and TART; Drosophila telomeres being maintained by transposition of specialized telomeric retroelements. Involved in telomeric trans-silencing, a repression mechanism by which a transposon or a transgene inserted in subtelomeric heterochromatin has the capacity to repress in trans in the female germline, a homologous transposon, or transgene located in euchromatin. Involved in the repression of testis-expressed Stellate genes by the homologous Su(Ste) repeats. Required for anteroposterior and dorsoventral axis formation during oogenesis. The sequence is that of Probable ATP-dependent RNA helicase spindle-E (spn-E) from Drosophila mojavensis (Fruit fly).